Here is a 201-residue protein sequence, read N- to C-terminus: Probable chemoreceptor glutamine deamidase CheD (201 aa).

The protein belongs to the CheD family.

It catalyses the reaction L-glutaminyl-[protein] + H2O = L-glutamyl-[protein] + NH4(+). In terms of biological role, probably deamidates glutamine residues to glutamate on methyl-accepting chemotaxis receptors (MCPs), playing an important role in chemotaxis. In Chlorobium luteolum (strain DSM 273 / BCRC 81028 / 2530) (Pelodictyon luteolum), this protein is Probable chemoreceptor glutamine deamidase CheD.